We begin with the raw amino-acid sequence, 156 residues long: DNA mismatch endonuclease Vsr (156 aa).

Mg(2+) is bound by residues Asp-51 and Thr-63.

It belongs to the Vsr family. Mg(2+) is required as a cofactor. It depends on Zn(2+) as a cofactor.

Functionally, deamination of 5-methylcytosine in DNA results in T/G mismatches. If unrepaired, these mismatches can lead to C-to-T transition mutations. The very short patch (VSP) repair process in E.coli counteracts the mutagenic process by repairing the mismatches in favor of the G-containing strand. This enzyme is an endonuclease that nicks double-stranded DNA within the sequence CT(AT)GN or NT(AT)GG next to the thymidine residue that is mismatched to 2'-deoxyguanosine. The incision is mismatch-dependent and strand-specific. The protein is DNA mismatch endonuclease Vsr of Escherichia coli (strain K12).